Reading from the N-terminus, the 448-residue chain is Maintenance of mitochondrial morphology protein 1 (448 aa).

Topologically, residues 1-74 are lumenal; it reads MTESVIYSGT…LNHTWSFTQG (74 aa). The helical transmembrane segment at 75-95 threads the bilayer; it reads LVVGQLSVIVVVAIFIKFFVF. The Cytoplasmic portion of the chain corresponds to 96 to 448; it reads ADSSATTTTT…IVDKTEEASI (353 aa). 2 disordered regions span residues 119–144 and 303–357; these read RNKN…LNSP and LQNV…SQED. The span at 127–140 shows a compositional bias: basic and acidic residues; the sequence is SNEDKDPNNNKEDD. The SMP-LTD domain occupies 164–419; that stretch reads SPESLDWFNV…EPRFQVVKVP (256 aa). The span at 313–332 shows a compositional bias: low complexity; the sequence is PSNEPNSQNQTQQPTPVNNS. The span at 345–356 shows a compositional bias: basic and acidic residues; sequence ETKHSKAKRSQE.

It belongs to the MMM1 family. Homodimer. Component of the ER-mitochondria encounter structure (ERMES) or MDM complex, composed of MMM1, MDM10, MDM12 and MDM34. An MMM1 homodimer associates with one molecule of MDM12 on each side in a pairwise head-to-tail manner, and the SMP-LTD domains of MMM1 and MDM12 generate a continuous hydrophobic tunnel for phospholipid trafficking.

The protein resides in the endoplasmic reticulum membrane. In terms of biological role, component of the ERMES/MDM complex, which serves as a molecular tether to connect the endoplasmic reticulum (ER) and mitochondria. Components of this complex are involved in the control of mitochondrial shape and protein biogenesis, and function in nonvesicular lipid trafficking between the ER and mitochondria. The MDM12-MMM1 subcomplex functions in the major beta-barrel assembly pathway that is responsible for biogenesis of all outer membrane beta-barrel proteins, and acts in a late step after the SAM complex. The MDM10-MDM12-MMM1 subcomplex further acts in the TOM40-specific pathway after the action of the MDM12-MMM1 complex. Essential for establishing and maintaining the structure of mitochondria and maintenance of mtDNA nucleoids. The sequence is that of Maintenance of mitochondrial morphology protein 1 from Debaryomyces hansenii (strain ATCC 36239 / CBS 767 / BCRC 21394 / JCM 1990 / NBRC 0083 / IGC 2968) (Yeast).